A 105-amino-acid polypeptide reads, in one-letter code: Ribosomal silencing factor RsfS (105 aa).

Belongs to the Iojap/RsfS family. As to quaternary structure, interacts with ribosomal protein uL14 (rplN).

The protein resides in the cytoplasm. Its function is as follows. Functions as a ribosomal silencing factor. Interacts with ribosomal protein uL14 (rplN), blocking formation of intersubunit bridge B8. Prevents association of the 30S and 50S ribosomal subunits and the formation of functional ribosomes, thus repressing translation. This chain is Ribosomal silencing factor RsfS, found in Escherichia coli O6:H1 (strain CFT073 / ATCC 700928 / UPEC).